The following is a 161-amino-acid chain: Cyclic pyranopterin monophosphate synthase (161 aa).

Substrate is bound by residues 75–77 (LCH) and 113–114 (ME). Residue D128 is part of the active site.

Belongs to the MoaC family. Homohexamer; trimer of dimers.

It carries out the reaction (8S)-3',8-cyclo-7,8-dihydroguanosine 5'-triphosphate = cyclic pyranopterin phosphate + diphosphate. The protein operates within cofactor biosynthesis; molybdopterin biosynthesis. In terms of biological role, catalyzes the conversion of (8S)-3',8-cyclo-7,8-dihydroguanosine 5'-triphosphate to cyclic pyranopterin monophosphate (cPMP). The protein is Cyclic pyranopterin monophosphate synthase of Enterobacter sp. (strain 638).